Consider the following 271-residue polypeptide: Shikimate dehydrogenase (NADP(+)) (271 aa).

Shikimate-binding positions include 19-21 and threonine 65; that span reads SLS. The active-site Proton acceptor is lysine 69. Glutamate 81 contributes to the NADP(+) binding site. Shikimate is bound by residues asparagine 90 and aspartate 105. NADP(+)-binding positions include 128–132, 150–155, and isoleucine 211; these read GAGGA and NRTIEK. Tyrosine 213 serves as a coordination point for shikimate. Glycine 234 provides a ligand contact to NADP(+).

The protein belongs to the shikimate dehydrogenase family. As to quaternary structure, homodimer.

The catalysed reaction is shikimate + NADP(+) = 3-dehydroshikimate + NADPH + H(+). It participates in metabolic intermediate biosynthesis; chorismate biosynthesis; chorismate from D-erythrose 4-phosphate and phosphoenolpyruvate: step 4/7. Its function is as follows. Involved in the biosynthesis of the chorismate, which leads to the biosynthesis of aromatic amino acids. Catalyzes the reversible NADPH linked reduction of 3-dehydroshikimate (DHSA) to yield shikimate (SA). The sequence is that of Shikimate dehydrogenase (NADP(+)) from Pyrococcus furiosus (strain ATCC 43587 / DSM 3638 / JCM 8422 / Vc1).